Here is a 155-residue protein sequence, read N- to C-terminus: Transcriptional repressor NrdR (155 aa).

A zinc finger spans residues 3 to 34; that stretch reads CPYCGHLEDRVVDSRETQDGQATRRRRACLSC. The region spanning 49 to 139 is the ATP-cone domain; it reads PQVVKKDGRR…VYRAFRDVGE (91 aa).

Belongs to the NrdR family. The cofactor is Zn(2+).

Its function is as follows. Negatively regulates transcription of bacterial ribonucleotide reductase nrd genes and operons by binding to NrdR-boxes. This chain is Transcriptional repressor NrdR, found in Anaeromyxobacter dehalogenans (strain 2CP-1 / ATCC BAA-258).